The primary structure comprises 178 residues: GTP-dependent dephospho-CoA kinase (178 aa).

GTP contacts are provided by Asp48, Ile49, Asp67, Lys69, and Glu126.

This sequence belongs to the GTP-dependent DPCK family.

It carries out the reaction 3'-dephospho-CoA + GTP = GDP + CoA + H(+). The protein operates within cofactor biosynthesis; coenzyme A biosynthesis. In terms of biological role, catalyzes the GTP-dependent phosphorylation of the 3'-hydroxyl group of dephosphocoenzyme A to form coenzyme A (CoA). In Methanothrix thermoacetophila (strain DSM 6194 / JCM 14653 / NBRC 101360 / PT) (Methanosaeta thermophila), this protein is GTP-dependent dephospho-CoA kinase.